The primary structure comprises 189 residues: Probable nicotinate-nucleotide adenylyltransferase (189 aa).

Belongs to the NadD family.

It carries out the reaction nicotinate beta-D-ribonucleotide + ATP + H(+) = deamido-NAD(+) + diphosphate. The protein operates within cofactor biosynthesis; NAD(+) biosynthesis; deamido-NAD(+) from nicotinate D-ribonucleotide: step 1/1. Functionally, catalyzes the reversible adenylation of nicotinate mononucleotide (NaMN) to nicotinic acid adenine dinucleotide (NaAD). The chain is Probable nicotinate-nucleotide adenylyltransferase from Bacillus cereus (strain AH187).